The primary structure comprises 121 residues: Small ribosomal subunit protein uS13 (121 aa).

A disordered region spans residues 91–121 (HRRGLPVRGQKTKNNARTRKGPVKTVANKKK).

Belongs to the universal ribosomal protein uS13 family. As to quaternary structure, part of the 30S ribosomal subunit. Forms a loose heterodimer with protein S19. Forms two bridges to the 50S subunit in the 70S ribosome.

In terms of biological role, located at the top of the head of the 30S subunit, it contacts several helices of the 16S rRNA. In the 70S ribosome it contacts the 23S rRNA (bridge B1a) and protein L5 of the 50S subunit (bridge B1b), connecting the 2 subunits; these bridges are implicated in subunit movement. Contacts the tRNAs in the A and P-sites. The chain is Small ribosomal subunit protein uS13 from Staphylococcus haemolyticus (strain JCSC1435).